We begin with the raw amino-acid sequence, 133 residues long: Large ribosomal subunit protein eL32 (133 aa).

The protein belongs to the eukaryotic ribosomal protein eL32 family.

In Dictyostelium discoideum (Social amoeba), this protein is Large ribosomal subunit protein eL32 (rpl32).